A 635-amino-acid chain; its full sequence is Peptidyl-prolyl cis-trans isomerase PASTICCINO1 (635 aa).

Over residues 1-10 the composition is skewed to polar residues; that stretch reads MAVGDQTEQN. Positions 1–28 are disordered; sequence MAVGDQTEQNYLPKKKKSETEDDKRRKK. 3 PPIase FKBP-type domains span residues 51–147, 175–260, and 291–383; these read GDQV…LDFS, PYEV…VHFI, and DSRL…LGFE. 3 TPR repeats span residues 400-433, 449-482, and 483-516; these read ADKIRSTGNRLFKEGKFELAKAKYEKVLREFNHV, NMLHLNVAACLLKMGEWRKSIETCNKVLEAKPGH, and VKGLYRRGMAYIAGGEYDDARNDFNMMIKVDKSS. The tract at residues 530–546 is calmodulin-binding; sequence KEQEAESKARKQFKGLF. Residues 569-586 are compositionally biased toward acidic residues; that stretch reads EVDETKDNDDDETLEEEG. The disordered stretch occupies residues 569-593; that stretch reads EVDETKDNDDDETLEEEGATTVSTE. The chain crosses the membrane as a helical; Anchor for type IV membrane protein span at residues 609–629; that stretch reads VMLQIGIQLGVVLIGILIFQF.

The protein belongs to the FKBP-type PPIase family. Interacts with calmodulin (CaM). Interacts with RPM1 and NAC089. Interacts with the elongase complex core members KCR1, PAS2 and CER10. As to expression, expressed ubiquitously.

It localises to the endoplasmic reticulum membrane. Its subcellular location is the cytoplasm. The protein localises to the nucleus. It catalyses the reaction [protein]-peptidylproline (omega=180) = [protein]-peptidylproline (omega=0). Functionally, PPIases accelerate the folding of proteins. It catalyzes the cis-trans isomerization of proline imidic peptide bonds in oligopeptides. Essential protein regulating cell division, adhesion and elongation throughout the plant development and embryogenesis. Required for the spatial organization of apical meristems. Involved in the hormonal control of cell division and differentiation mediated by cytokinins and auxin. Regulates the function of NAC089 transcription factor by controlling its targeting to the nucleus upon plant cell division. Interacts with enzymes of the fatty acid elongase complex and favors the generation of very-long-chain fatty acids (VLCFAs) required for polar auxin transport and tissue patterning during plant development. This Arabidopsis thaliana (Mouse-ear cress) protein is Peptidyl-prolyl cis-trans isomerase PASTICCINO1 (PAS1).